The following is a 345-amino-acid chain: Transcription factor 19 (345 aa).

The region spanning 31–88 is the FHA domain; that stretch reads YRLGHRADLCDVALRPQQEPGLISGIHAELHAEPRGDDWRVSLEDHSLQGTLVNNVRL. Disordered regions lie at residues 138–167 and 190–277; these read RSRG…STLS and LTFS…KYPV. The segment at 293–342 adopts a PHD-type zinc-finger fold; sequence AAPCCCLPQEETVAWVQCDGCDVWFHVACVGCSIQAAREADFRCPGCRAG. The Zn(2+) site is built by C296, C298, C310, C313, H318, C321, C336, and C339.

The protein localises to the nucleus. Potential transcription factor that may play a role in the regulation of genes involved in cell cycle G1/S transition. May bind to regulatory elements of genes, including the promoter of the transcription factor FOXO1. The polypeptide is Transcription factor 19 (TCF19) (Macaca mulatta (Rhesus macaque)).